A 181-amino-acid chain; its full sequence is Extracellular superoxide dismutase [Cu-Zn] (181 aa).

The first 18 residues, 1–18, serve as a signal peptide directing secretion; sequence MMQYLVVSLALCATICSA. N-linked (GlcNAc...) asparagine glycosylation occurs at Asn46. Residues His75, His77, and His92 each coordinate Cu cation. Cys86 and Cys175 are disulfide-bonded. His92, His100, His109, and Asp112 together coordinate Zn(2+). Asn119 carries an N-linked (GlcNAc...) asparagine glycan. Residue His149 participates in Cu cation binding. Asn159 carries N-linked (GlcNAc...) asparagine glycosylation.

The protein belongs to the Cu-Zn superoxide dismutase family. Cu cation is required as a cofactor. The cofactor is Zn(2+). In terms of tissue distribution, expressed at higher levels in females compared to males.

The protein localises to the secreted. It carries out the reaction 2 superoxide + 2 H(+) = H2O2 + O2. Its function is as follows. Protects the extracellular space from the toxic effects of reactive oxygen intermediates by converting superoxide radicals into hydrogen peroxide and oxygen. This Drosophila melanogaster (Fruit fly) protein is Extracellular superoxide dismutase [Cu-Zn].